We begin with the raw amino-acid sequence, 310 residues long: Phosphoribosylaminoimidazole-succinocarboxamide synthase (310 aa).

It belongs to the SAICAR synthetase family.

It catalyses the reaction 5-amino-1-(5-phospho-D-ribosyl)imidazole-4-carboxylate + L-aspartate + ATP = (2S)-2-[5-amino-1-(5-phospho-beta-D-ribosyl)imidazole-4-carboxamido]succinate + ADP + phosphate + 2 H(+). Its pathway is purine metabolism; IMP biosynthesis via de novo pathway; 5-amino-1-(5-phospho-D-ribosyl)imidazole-4-carboxamide from 5-amino-1-(5-phospho-D-ribosyl)imidazole-4-carboxylate: step 1/2. In Xanthomonas axonopodis pv. citri (strain 306), this protein is Phosphoribosylaminoimidazole-succinocarboxamide synthase.